The following is a 162-amino-acid chain: Interleukin-2 (162 aa).

The signal sequence occupies residues 1 to 20; sequence MYKIQLLSCIALTLALVANG. O-linked (GalNAc...) threonine glycosylation occurs at T23. A glycan (N-linked (GlcNAc...) asparagine) is linked at N70. The cysteines at positions 79 and 134 are disulfide-linked.

This sequence belongs to the IL-2 family.

Its subcellular location is the secreted. Functionally, cytokine produced by activated CD4-positive helper T-cells and to a lesser extend activated CD8-positive T-cells and natural killer (NK) cells that plays pivotal roles in the immune response and tolerance. Binds to a receptor complex composed of either the high-affinity trimeric IL-2R (IL2RA/CD25, IL2RB/CD122 and IL2RG/CD132) or the low-affinity dimeric IL-2R (IL2RB and IL2RG). Interaction with the receptor leads to oligomerization and conformation changes in the IL-2R subunits resulting in downstream signaling starting with phosphorylation of JAK1 and JAK3. In turn, JAK1 and JAK3 phosphorylate the receptor to form a docking site leading to the phosphorylation of several substrates including STAT5. This process leads to activation of several pathways including STAT, phosphoinositide-3-kinase/PI3K and mitogen-activated protein kinase/MAPK pathways. Functions as a T-cell growth factor and can increase NK-cell cytolytic activity as well. Promotes strong proliferation of activated B-cells and subsequently immunoglobulin production. Plays a pivotal role in regulating the adaptive immune system by controlling the survival and proliferation of regulatory T-cells, which are required for the maintenance of immune tolerance. Moreover, participates in the differentiation and homeostasis of effector T-cell subsets, including Th1, Th2, Th17 as well as memory CD8-positive T-cells. This Cervus elaphus (Red deer) protein is Interleukin-2 (IL2).